We begin with the raw amino-acid sequence, 184 residues long: Casparian strip membrane protein 3 (184 aa).

At 1 to 24 the chain is on the cytoplasmic side; the sequence is MEGSEEHGETSKAPLSRGVSKGVS. The helical transmembrane segment at 25–45 threads the bilayer; the sequence is ILDVILRFVAIIGTLASAIAM. Residues 46-72 are Extracellular-facing; that stretch reads GTTNQTLPFFTQFIRFKAQYSDLPTLT. N-linked (GlcNAc...) asparagine glycosylation occurs at asparagine 49. Residues 73 to 93 form a helical membrane-spanning segment; the sequence is FFVVANSIVSAYLILSLPLSI. Over 94–105 the chain is Cytoplasmic; sequence VHVIRSRAKYSR. The helical transmembrane segment at 106 to 126 threads the bilayer; it reads LILIFFDAAMLALVTAGASAA. At 127–159 the chain is on the extracellular side; sequence AAIVYLAHKGNARANWLAICQQFDSFCERISGS. The chain crosses the membrane as a helical span at residues 160-180; it reads LIGSFAAMVVLVLLIFLSAIA. Topologically, residues 181 to 184 are cytoplasmic; sequence LARR.

Belongs to the Casparian strip membrane proteins (CASP) family. In terms of assembly, homodimer and heterodimers.

It localises to the cell membrane. Regulates membrane-cell wall junctions and localized cell wall deposition. Required for establishment of the Casparian strip membrane domain (CSD) and the subsequent formation of Casparian strips, a cell wall modification of the root endodermis that determines an apoplastic barrier between the intraorganismal apoplasm and the extraorganismal apoplasm and prevents lateral diffusion. In Oryza sativa subsp. indica (Rice), this protein is Casparian strip membrane protein 3.